Reading from the N-terminus, the 239-residue chain is 1-(5-phosphoribosyl)-5-[(5-phosphoribosylamino)methylideneamino] imidazole-4-carboxamide isomerase (239 aa).

Asp-8 serves as the catalytic Proton acceptor. Asp-129 (proton donor) is an active-site residue.

The protein belongs to the HisA/HisF family.

Its subcellular location is the cytoplasm. It catalyses the reaction 1-(5-phospho-beta-D-ribosyl)-5-[(5-phospho-beta-D-ribosylamino)methylideneamino]imidazole-4-carboxamide = 5-[(5-phospho-1-deoxy-D-ribulos-1-ylimino)methylamino]-1-(5-phospho-beta-D-ribosyl)imidazole-4-carboxamide. Its pathway is amino-acid biosynthesis; L-histidine biosynthesis; L-histidine from 5-phospho-alpha-D-ribose 1-diphosphate: step 4/9. This Legionella pneumophila (strain Corby) protein is 1-(5-phosphoribosyl)-5-[(5-phosphoribosylamino)methylideneamino] imidazole-4-carboxamide isomerase.